An 808-amino-acid polypeptide reads, in one-letter code: Leucine--tRNA ligase (808 aa).

Positions 40–51 (PYPSGQGLHVGH) match the 'HIGH' region motif. The short motif at 580 to 584 (KMSKS) is the 'KMSKS' region element. Position 583 (Lys583) interacts with ATP.

It belongs to the class-I aminoacyl-tRNA synthetase family.

The protein resides in the cytoplasm. It carries out the reaction tRNA(Leu) + L-leucine + ATP = L-leucyl-tRNA(Leu) + AMP + diphosphate. This Leuconostoc mesenteroides subsp. mesenteroides (strain ATCC 8293 / DSM 20343 / BCRC 11652 / CCM 1803 / JCM 6124 / NCDO 523 / NBRC 100496 / NCIMB 8023 / NCTC 12954 / NRRL B-1118 / 37Y) protein is Leucine--tRNA ligase.